Consider the following 208-residue polypeptide: Uracil phosphoribosyltransferase (208 aa).

Residues R78, R103, and 130 to 138 (DPMLATGGS) contribute to the 5-phospho-alpha-D-ribose 1-diphosphate site. Residues I193 and 198 to 200 (GDA) contribute to the uracil site. Residue D199 coordinates 5-phospho-alpha-D-ribose 1-diphosphate.

Belongs to the UPRTase family. It depends on Mg(2+) as a cofactor.

It carries out the reaction UMP + diphosphate = 5-phospho-alpha-D-ribose 1-diphosphate + uracil. Its pathway is pyrimidine metabolism; UMP biosynthesis via salvage pathway; UMP from uracil: step 1/1. With respect to regulation, allosterically activated by GTP. Its function is as follows. Catalyzes the conversion of uracil and 5-phospho-alpha-D-ribose 1-diphosphate (PRPP) to UMP and diphosphate. The protein is Uracil phosphoribosyltransferase of Klebsiella pneumoniae subsp. pneumoniae (strain ATCC 700721 / MGH 78578).